A 156-amino-acid polypeptide reads, in one-letter code: Small ribosomal subunit protein uS7 (156 aa).

The protein belongs to the universal ribosomal protein uS7 family. In terms of assembly, part of the 30S ribosomal subunit. Contacts proteins S9 and S11.

Functionally, one of the primary rRNA binding proteins, it binds directly to 16S rRNA where it nucleates assembly of the head domain of the 30S subunit. Is located at the subunit interface close to the decoding center, probably blocks exit of the E-site tRNA. This chain is Small ribosomal subunit protein uS7, found in Lactobacillus delbrueckii subsp. bulgaricus (strain ATCC 11842 / DSM 20081 / BCRC 10696 / JCM 1002 / NBRC 13953 / NCIMB 11778 / NCTC 12712 / WDCM 00102 / Lb 14).